Consider the following 371-residue polypeptide: MSKRDYYEVLGLSKGASKDEIKKAYRRLAKKYHPDVSKEENAIEKFKEVQEAYEVLSDDQKRAQYDQFGHAGANQGFGGFGGGGDFGGGFGFEDIFSSFFGGGGGRRRDPNAPRQGADLQYQVTLDFEEAIFGKELNVEIPVEDPCDTCKGSGAKPGTSKETCKHCSGSGQVSVEQNTPFGRIVNRQACGHCSGTGQIIKEKCTTCHGSGKVRKRKKINVKIPAGIDNGQQIRVSGKGEAGVNGGPAGDLYVVVHVRNHEFFEREGDHIICEMPLTFAQMALGDEVEVPTVHGKVKLKIPAGTQTGTEFRLKGKGAPNVRGYGQGDQYVVVRVVVPTKLTSQQKDLLREFAGQEEQDDSLFGKLKRAFKGE.

The region spanning 5–69 (DYYEVLGLSK…QKRAQYDQFG (65 aa)) is the J domain. The CR-type zinc-finger motif lies at 133 to 215 (GKELNVEIPV…CHGSGKVRKR (83 aa)). Zn(2+)-binding residues include Cys-146, Cys-149, Cys-163, Cys-166, Cys-189, Cys-192, Cys-203, and Cys-206. CXXCXGXG motif repeat units lie at residues 146–153 (CDTCKGSG), 163–170 (CKHCSGSG), 189–196 (CGHCSGTG), and 203–210 (CTTCHGSG).

It belongs to the DnaJ family. As to quaternary structure, homodimer. Zn(2+) is required as a cofactor.

Its subcellular location is the cytoplasm. Its function is as follows. Participates actively in the response to hyperosmotic and heat shock by preventing the aggregation of stress-denatured proteins and by disaggregating proteins, also in an autonomous, DnaK-independent fashion. Unfolded proteins bind initially to DnaJ; upon interaction with the DnaJ-bound protein, DnaK hydrolyzes its bound ATP, resulting in the formation of a stable complex. GrpE releases ADP from DnaK; ATP binding to DnaK triggers the release of the substrate protein, thus completing the reaction cycle. Several rounds of ATP-dependent interactions between DnaJ, DnaK and GrpE are required for fully efficient folding. Also involved, together with DnaK and GrpE, in the DNA replication of plasmids through activation of initiation proteins. The chain is Chaperone protein DnaJ from Bacillus cereus (strain ATCC 10987 / NRS 248).